A 221-amino-acid chain; its full sequence is Chaperone protein TorD (221 aa).

The protein belongs to the TorD/DmsD family. TorD subfamily.

It localises to the cytoplasm. Functionally, involved in the biogenesis of TorA. Acts on TorA before the insertion of the molybdenum cofactor and, as a result, probably favors a conformation of the apoenzyme that is competent for acquiring the cofactor. This Shewanella pealeana (strain ATCC 700345 / ANG-SQ1) protein is Chaperone protein TorD.